The primary structure comprises 107 residues: Urease subunit beta (107 aa).

Belongs to the urease beta subunit family. As to quaternary structure, heterotrimer of UreA (gamma), UreB (beta) and UreC (alpha) subunits. Three heterotrimers associate to form the active enzyme.

The protein resides in the cytoplasm. It catalyses the reaction urea + 2 H2O + H(+) = hydrogencarbonate + 2 NH4(+). It functions in the pathway nitrogen metabolism; urea degradation; CO(2) and NH(3) from urea (urease route): step 1/1. This is Urease subunit beta from Teredinibacter turnerae (strain ATCC 39867 / T7901).